Reading from the N-terminus, the 21-residue chain is Thioredoxin (21 aa).

Lys3 is modified (N6-acetyllysine). Residue Lys8 is modified to N6-succinyllysine.

The protein belongs to the thioredoxin family. As to quaternary structure, homodimer; disulfide-linked. Interacts with TXNIP through the redox-active site. Interacts with MAP3K5 and CASP3. Interacts with APEX1; the interaction stimulates the FOS/JUN AP-1 DNA-binding activity in a redox-dependent manner.

It localises to the nucleus. The protein localises to the cytoplasm. It is found in the secreted. Functionally, participates in various redox reactions through the reversible oxidation of its active center dithiol to a disulfide and catalyzes dithiol-disulfide exchange reactions. Plays a role in the reversible S-nitrosylation of cysteine residues in target proteins, and thereby contributes to the response to intracellular nitric oxide. Nitrosylates the active site Cys of CASP3 in response to nitric oxide (NO), and thereby inhibits caspase-3 activity. Induces the FOS/JUN AP-1 DNA binding activity in ionizing radiation (IR) cells through its oxidation/reduction status and stimulates AP-1 transcriptional activity. This chain is Thioredoxin (TXN), found in Canis lupus familiaris (Dog).